The primary structure comprises 292 residues: Cytidine deaminase (292 aa).

2 consecutive CMP/dCMP-type deaminase domains span residues 47–167 (TTLK…FGPK) and 186–292 (DHQD…YYSL). Residue 88-90 (NQE) coordinates substrate. Histidine 101 contributes to the Zn(2+) binding site. The active-site Proton donor is the glutamate 103. Zn(2+) is bound by residues cysteine 128 and cysteine 131.

Belongs to the cytidine and deoxycytidylate deaminase family. Homodimer. The cofactor is Zn(2+).

It carries out the reaction cytidine + H2O + H(+) = uridine + NH4(+). It catalyses the reaction 2'-deoxycytidine + H2O + H(+) = 2'-deoxyuridine + NH4(+). Its function is as follows. This enzyme scavenges exogenous and endogenous cytidine and 2'-deoxycytidine for UMP synthesis. This Haemophilus influenzae (strain ATCC 51907 / DSM 11121 / KW20 / Rd) protein is Cytidine deaminase.